Here is a 166-residue protein sequence, read N- to C-terminus: MIYIDNRQNKIKVDEEFENKIKEIIDYALKEEKVNIDYEISVIFIDNNSIKEINKDYRNIDKATDVLSFPMLDYEEGEVFKDVYLNYEFDESDLDEGNLVLGDIALSLEKAEEQSKEFGHSFLRETCYLTIHSVLHLLGYDHMEEDEKAIMRQREEEILKSFNLHR.

Zn(2+) is bound by residues His-132, His-136, and His-142.

Belongs to the endoribonuclease YbeY family. Zn(2+) is required as a cofactor.

It localises to the cytoplasm. Single strand-specific metallo-endoribonuclease involved in late-stage 70S ribosome quality control and in maturation of the 3' terminus of the 16S rRNA. This is Endoribonuclease YbeY from Clostridium botulinum (strain Loch Maree / Type A3).